The following is a 257-amino-acid chain: MSVAGKNVVFVGGLGFIGYEACKTLITRDLASLFVFDILDKPEAVKALEEINPKTKVYYTKFDITSKDNIKQSLADVIAKVQYIDVLVNGAGILNDPNVEWTMNINLIGLINTTLEAIPLMDKNKKGRGGVIVNIASVLGLEPGPPAAIYCASKFGVMGFSRSLGDPHYYEHTGIAVVTFCPGLTDTPLKNNVATKYTFDYSKEIGEKLNHSKTQKPEVCGAHLAQVIELRDNGAIYISNQGTLTKVKPSVYWEPTY.

9 to 33 provides a ligand contact to NAD(+); the sequence is VFVGGLGFIGYEACKTLITRDLASL. Residue Ser-137 coordinates substrate. Tyr-150 (proton acceptor) is an active-site residue.

The protein belongs to the short-chain dehydrogenases/reductases (SDR) family. As to quaternary structure, homodimer.

It catalyses the reaction a primary alcohol + NAD(+) = an aldehyde + NADH + H(+). It carries out the reaction a secondary alcohol + NAD(+) = a ketone + NADH + H(+). The polypeptide is Alcohol dehydrogenase 1 (ADH1) (Ceratitis cosyra (Mango fruit fly)).